Consider the following 280-residue polypeptide: Bis(5'-nucleosyl)-tetraphosphatase, symmetrical (280 aa).

This sequence belongs to the Ap4A hydrolase family.

The enzyme catalyses P(1),P(4)-bis(5'-adenosyl) tetraphosphate + H2O = 2 ADP + 2 H(+). Functionally, hydrolyzes diadenosine 5',5'''-P1,P4-tetraphosphate to yield ADP. The sequence is that of Bis(5'-nucleosyl)-tetraphosphatase, symmetrical from Paracidovorax citrulli (strain AAC00-1) (Acidovorax citrulli).